The sequence spans 215 residues: ATP-dependent dethiobiotin synthetase BioD (215 aa).

13-18 serves as a coordination point for ATP; sequence DIGKTV. T17 is a binding site for Mg(2+). The active site involves K38. Substrate is bound at residue T42. Residues D50, 115-118, and 175-176 contribute to the ATP site; these read EGAG and NH. D50 and E115 together coordinate Mg(2+).

Belongs to the dethiobiotin synthetase family. Homodimer. It depends on Mg(2+) as a cofactor.

It localises to the cytoplasm. The enzyme catalyses (7R,8S)-7,8-diammoniononanoate + CO2 + ATP = (4R,5S)-dethiobiotin + ADP + phosphate + 3 H(+). It participates in cofactor biosynthesis; biotin biosynthesis; biotin from 7,8-diaminononanoate: step 1/2. Its function is as follows. Catalyzes a mechanistically unusual reaction, the ATP-dependent insertion of CO2 between the N7 and N8 nitrogen atoms of 7,8-diaminopelargonic acid (DAPA, also called 7,8-diammoniononanoate) to form a ureido ring. The sequence is that of ATP-dependent dethiobiotin synthetase BioD from Neisseria gonorrhoeae (strain NCCP11945).